Consider the following 73-residue polypeptide: Large ribosomal subunit protein bL28 (73 aa).

Belongs to the bacterial ribosomal protein bL28 family.

The chain is Large ribosomal subunit protein bL28 from Fervidobacterium nodosum (strain ATCC 35602 / DSM 5306 / Rt17-B1).